The chain runs to 228 residues: L-ornithine N5-acetyltransferase NATA1 (228 aa).

Residues 1–21 (MAPPTAAPEPNTVPETSPTGH) form a disordered region. An N-acetyltransferase domain is found at 77–227 (VFLLEISPSP…DALQAIDKLN (151 aa)). Acetyl-CoA-binding positions include 153–155 (IFM), 161–166 (RKGFGK), 192–195 (NVNA), and Tyr-199.

It belongs to the acetyltransferase family.

In terms of biological role, acetyltransferase that converts ornithine to N5-acetylornithine, which is likely used in plant defense. This is L-ornithine N5-acetyltransferase NATA1 (NATA1) from Arabidopsis thaliana (Mouse-ear cress).